A 436-amino-acid chain; its full sequence is Gamma-glutamyl phosphate reductase (436 aa).

It belongs to the gamma-glutamyl phosphate reductase family.

It is found in the cytoplasm. The enzyme catalyses L-glutamate 5-semialdehyde + phosphate + NADP(+) = L-glutamyl 5-phosphate + NADPH + H(+). Its pathway is amino-acid biosynthesis; L-proline biosynthesis; L-glutamate 5-semialdehyde from L-glutamate: step 2/2. Catalyzes the NADPH-dependent reduction of L-glutamate 5-phosphate into L-glutamate 5-semialdehyde and phosphate. The product spontaneously undergoes cyclization to form 1-pyrroline-5-carboxylate. The protein is Gamma-glutamyl phosphate reductase of Prochlorococcus marinus (strain MIT 9515).